Here is a 403-residue protein sequence, read N- to C-terminus: Phosphoglycerate kinase (403 aa).

Residues 22–24 (DLN), Arg37, 60–63 (HLGR), Arg119, and Arg156 contribute to the substrate site. Residues Lys206, Gly302, Glu333, and 359–362 (GGDS) each bind ATP.

This sequence belongs to the phosphoglycerate kinase family. In terms of assembly, monomer.

The protein resides in the cytoplasm. It carries out the reaction (2R)-3-phosphoglycerate + ATP = (2R)-3-phospho-glyceroyl phosphate + ADP. It participates in carbohydrate degradation; glycolysis; pyruvate from D-glyceraldehyde 3-phosphate: step 2/5. This chain is Phosphoglycerate kinase, found in Streptomyces griseus subsp. griseus (strain JCM 4626 / CBS 651.72 / NBRC 13350 / KCC S-0626 / ISP 5235).